The primary structure comprises 182 residues: Heat shock protein beta-2 (182 aa).

One can recognise a sHSP domain in the interval R55 to S163.

Belongs to the small heat shock protein (HSP20) family. Interacts with DMPK; may enhance its kinase activity.

It localises to the cytoplasm. The protein localises to the nucleus. Functionally, may regulate the kinase DMPK. In Rattus norvegicus (Rat), this protein is Heat shock protein beta-2 (Hspb2).